A 395-amino-acid polypeptide reads, in one-letter code: Imidazolonepropionase (395 aa).

2 residues coordinate Fe(3+): His63 and His65. Zn(2+) contacts are provided by His63 and His65. 4-imidazolone-5-propanoate is bound by residues Arg72, Tyr135, and His168. Residue Tyr135 participates in N-formimidoyl-L-glutamate binding. A Fe(3+)-binding site is contributed by His233. His233 is a binding site for Zn(2+). Position 236 (Gln236) interacts with 4-imidazolone-5-propanoate. Asp308 contacts Fe(3+). Asp308 serves as a coordination point for Zn(2+). Asn310 and Gly312 together coordinate N-formimidoyl-L-glutamate. Thr313 contacts 4-imidazolone-5-propanoate.

The protein belongs to the metallo-dependent hydrolases superfamily. HutI family. It depends on Zn(2+) as a cofactor. Requires Fe(3+) as cofactor.

The protein localises to the cytoplasm. The catalysed reaction is 4-imidazolone-5-propanoate + H2O = N-formimidoyl-L-glutamate. It participates in amino-acid degradation; L-histidine degradation into L-glutamate; N-formimidoyl-L-glutamate from L-histidine: step 3/3. Its function is as follows. Catalyzes the hydrolytic cleavage of the carbon-nitrogen bond in imidazolone-5-propanoate to yield N-formimidoyl-L-glutamate. It is the third step in the universal histidine degradation pathway. This chain is Imidazolonepropionase, found in Cereibacter sphaeroides (strain ATCC 17023 / DSM 158 / JCM 6121 / CCUG 31486 / LMG 2827 / NBRC 12203 / NCIMB 8253 / ATH 2.4.1.) (Rhodobacter sphaeroides).